A 302-amino-acid chain; its full sequence is Catechol 1,2-dioxygenase (302 aa).

Fe cation contacts are provided by Tyr164, Tyr198, His222, and His224.

It belongs to the intradiol ring-cleavage dioxygenase family. The cofactor is Fe(3+).

The catalysed reaction is catechol + O2 = cis,cis-muconate + 2 H(+). Its pathway is aromatic compound metabolism; beta-ketoadipate pathway; 5-oxo-4,5-dihydro-2-furylacetate from catechol: step 1/3. The sequence is that of Catechol 1,2-dioxygenase (pheB) from Pseudomonas sp. (strain EST1001).